Consider the following 211-residue polypeptide: Proteasome subunit beta (211 aa).

A propeptide spans 1–9 (MSEAETLKG) (removed in mature form; by autocatalysis). Threonine 10 functions as the Nucleophile in the catalytic mechanism.

This sequence belongs to the peptidase T1B family. The 20S proteasome core is composed of 14 alpha and 14 beta subunits that assemble into four stacked heptameric rings, resulting in a barrel-shaped structure. The two inner rings, each composed of seven catalytic beta subunits, are sandwiched by two outer rings, each composed of seven alpha subunits. The catalytic chamber with the active sites is on the inside of the barrel. Has a gated structure, the ends of the cylinder being occluded by the N-termini of the alpha-subunits. Is capped at one or both ends by the proteasome regulatory ATPase, PAN.

Its subcellular location is the cytoplasm. The catalysed reaction is Cleavage of peptide bonds with very broad specificity.. The formation of the proteasomal ATPase PAN-20S proteasome complex, via the docking of the C-termini of PAN into the intersubunit pockets in the alpha-rings, triggers opening of the gate for substrate entry. Interconversion between the open-gate and close-gate conformations leads to a dynamic regulation of the 20S proteasome proteolysis activity. In terms of biological role, component of the proteasome core, a large protease complex with broad specificity involved in protein degradation. This is Proteasome subunit beta from Methanosphaerula palustris (strain ATCC BAA-1556 / DSM 19958 / E1-9c).